Reading from the N-terminus, the 690-residue chain is Elongation factor G (690 aa).

The region spanning 8 to 283 (EDYRNFGIMA…AVVDYLPSPV (276 aa)) is the tr-type G domain. GTP contacts are provided by residues 17 to 24 (AHIDAGKT), 81 to 85 (DTPGH), and 135 to 138 (NKMD).

It belongs to the TRAFAC class translation factor GTPase superfamily. Classic translation factor GTPase family. EF-G/EF-2 subfamily.

The protein localises to the cytoplasm. Catalyzes the GTP-dependent ribosomal translocation step during translation elongation. During this step, the ribosome changes from the pre-translocational (PRE) to the post-translocational (POST) state as the newly formed A-site-bound peptidyl-tRNA and P-site-bound deacylated tRNA move to the P and E sites, respectively. Catalyzes the coordinated movement of the two tRNA molecules, the mRNA and conformational changes in the ribosome. The polypeptide is Elongation factor G (Rhodopseudomonas palustris (strain BisB18)).